A 498-amino-acid chain; its full sequence is Ribose import ATP-binding protein RbsA (498 aa).

ABC transporter domains are found at residues 2-237 and 247-491; these read LALQ…VGRD and VTPG…TGQQ. An ATP-binding site is contributed by 34 to 41; it reads GENGAGKS.

Belongs to the ABC transporter superfamily. Ribose importer (TC 3.A.1.2.1) family. The complex is composed of an ATP-binding protein (RbsA), two transmembrane proteins (RbsC) and a solute-binding protein (RbsB).

It is found in the cell membrane. It catalyses the reaction D-ribose(out) + ATP + H2O = D-ribose(in) + ADP + phosphate + H(+). Its function is as follows. Part of the ABC transporter complex RbsABC involved in ribose import. Responsible for energy coupling to the transport system. The sequence is that of Ribose import ATP-binding protein RbsA from Deinococcus geothermalis (strain DSM 11300 / CIP 105573 / AG-3a).